We begin with the raw amino-acid sequence, 334 residues long: Ornithine carbamoyltransferase (334 aa).

Carbamoyl phosphate contacts are provided by residues 56-59 (STRT), Gln-83, Arg-107, and 134-137 (HPTQ). L-ornithine contacts are provided by residues Asn-168, Asp-232, and 236 to 237 (SM). Carbamoyl phosphate-binding positions include 274–275 (CL) and Arg-320.

Belongs to the aspartate/ornithine carbamoyltransferase superfamily. OTCase family.

It localises to the cytoplasm. The catalysed reaction is carbamoyl phosphate + L-ornithine = L-citrulline + phosphate + H(+). It functions in the pathway amino-acid biosynthesis; L-arginine biosynthesis; L-arginine from L-ornithine and carbamoyl phosphate: step 1/3. Its function is as follows. Reversibly catalyzes the transfer of the carbamoyl group from carbamoyl phosphate (CP) to the N(epsilon) atom of ornithine (ORN) to produce L-citrulline. The protein is Ornithine carbamoyltransferase of Shigella boydii serotype 4 (strain Sb227).